Consider the following 336-residue polypeptide: Ribosomal RNA small subunit methyltransferase C (336 aa).

It belongs to the methyltransferase superfamily. RsmC family. As to quaternary structure, monomer.

It is found in the cytoplasm. The enzyme catalyses guanosine(1207) in 16S rRNA + S-adenosyl-L-methionine = N(2)-methylguanosine(1207) in 16S rRNA + S-adenosyl-L-homocysteine + H(+). In terms of biological role, specifically methylates the guanine in position 1207 of 16S rRNA in the 30S particle. The protein is Ribosomal RNA small subunit methyltransferase C of Hamiltonella defensa subsp. Acyrthosiphon pisum (strain 5AT).